The sequence spans 426 residues: Proline--tRNA ligase (426 aa).

Belongs to the class-II aminoacyl-tRNA synthetase family. ProS type 2 subfamily. Homodimer.

It localises to the cytoplasm. It catalyses the reaction tRNA(Pro) + L-proline + ATP = L-prolyl-tRNA(Pro) + AMP + diphosphate. Catalyzes the attachment of proline to tRNA(Pro) in a two-step reaction: proline is first activated by ATP to form Pro-AMP and then transferred to the acceptor end of tRNA(Pro). In Rickettsia africae (strain ESF-5), this protein is Proline--tRNA ligase.